The primary structure comprises 194 residues: 7-methyl-GTP pyrophosphatase (194 aa).

Residue Asp-69 is the Proton acceptor of the active site.

It belongs to the Maf family. YceF subfamily. It depends on a divalent metal cation as a cofactor.

It is found in the cytoplasm. It catalyses the reaction N(7)-methyl-GTP + H2O = N(7)-methyl-GMP + diphosphate + H(+). Functionally, nucleoside triphosphate pyrophosphatase that hydrolyzes 7-methyl-GTP (m(7)GTP). May have a dual role in cell division arrest and in preventing the incorporation of modified nucleotides into cellular nucleic acids. This is 7-methyl-GTP pyrophosphatase (yceF1) from Shigella boydii serotype 4 (strain Sb227).